The chain runs to 687 residues: Protein Smaug homolog 2 (687 aa).

Basic and acidic residues predominate over residues Thr160–Ser172. The tract at residues Thr160–Met301 is disordered. Ser172 bears the Phosphoserine mark. Low complexity-rich tracts occupy residues Trp175–Trp190 and His200–Pro211. The span at Ser215 to Leu224 shows a compositional bias: polar residues. 4 positions are modified to phosphoserine: Ser271, Ser278, Ser279, and Ser281. A compositionally biased stretch (low complexity) spans Ser278–Ser290. In terms of domain architecture, SAM spans Ser299–Glu372. Residue Thr400 is modified to Phosphothreonine. The disordered stretch occupies residues Thr402–Ile464. The span at Gly424 to Pro435 shows a compositional bias: basic and acidic residues. Residues Pro448–Asp461 are compositionally biased toward low complexity. Phosphoserine is present on residues Ser548, Ser550, Ser556, Ser585, and Ser593. Position 595 is an asymmetric dimethylarginine (Arg595). The tract at residues Ser600–Leu636 is disordered. Positions Gly617 to Leu636 are enriched in polar residues. Ser621 is subject to Phosphoserine.

This sequence belongs to the SMAUG family.

The protein localises to the cytoplasm. It localises to the nucleus. In terms of biological role, has transcriptional repressor activity. Overexpression inhibits the transcriptional activities of AP-1, p53/TP53 and CDKN1A. This Mus musculus (Mouse) protein is Protein Smaug homolog 2 (Samd4b).